We begin with the raw amino-acid sequence, 553 residues long: Flotillin family inner membrane protein YqiK (553 aa).

Topologically, residues Met1 to Pro9 are periplasmic. The helical transmembrane segment at Ser10–Ala30 threads the bilayer. Topologically, residues Arg31–Glu553 are cytoplasmic.

This sequence belongs to the band 7/mec-2 family. Flotillin subfamily. In terms of assembly, homooligomerizes.

It localises to the cell inner membrane. The protein localises to the membrane raft. Found in membrane microdomains that may be equivalent to eukaryotic membrane rafts. FMMs are highly dynamic and increase in number as cells age. Flotillins are thought to be important factors in membrane fluidity. The chain is Flotillin family inner membrane protein YqiK (yqiK) from Escherichia coli (strain K12).